An 834-amino-acid polypeptide reads, in one-letter code: Taste receptor type 1 member 2 (834 aa).

The N-terminal stretch at 1–19 (MEPRVRTVCFLFFLLRVLA) is a signal peptide. Topologically, residues 20-561 (EPAKNSDFYL…SFLEWHEAAT (542 aa)) are extracellular. 7 N-linked (GlcNAc...) asparagine glycosylation sites follow: asparagine 84, asparagine 292, asparagine 312, asparagine 363, asparagine 423, asparagine 482, and asparagine 522. A helical membrane pass occupies residues 562–582 (IAVALLAALGFLSTLAILVIF). At 583 to 597 (WRHFETPMVRSAGGP) the chain is on the cytoplasmic side. Residues 598-618 (MCFLMLTLLLVAYMVVPVYVG) form a helical membrane-spanning segment. At 619-630 (LPKVSTCLCRQA) the chain is on the extracellular side. The chain crosses the membrane as a helical span at residues 631–651 (LFPVCFTICISCIAVRSFQIV). Residues 652–676 (CVFKMASRFPRAYSYWVRYQGSYVS) lie on the Cytoplasmic side of the membrane. A helical membrane pass occupies residues 677–697 (VAFITALKMVTVVISLLATGL). Over 698–722 (NPTTRTDTDDPKIMIISCNPNYRNS) the chain is Extracellular. Residues 723–743 (LLFNTSLDLLLSVAGFSFAYM) form a helical membrane-spanning segment. At 744–755 (GKELPTNYNEAK) the chain is on the cytoplasmic side. A helical transmembrane segment spans residues 756-776 (FITFSMTFYFTSSVSLCTFMS). Over 777–779 (VYD) the chain is Extracellular. Residues 780–800 (GVLVTIVDLLVTVFNLLAISL) form a helical membrane-spanning segment. At 801–834 (GYFGPKCYMILFYPERNTPAYFNSMIQGYTMRRD) the chain is on the cytoplasmic side.

The protein belongs to the G-protein coupled receptor 3 family. TAS1R subfamily. Forms heterodimers with TAS1R3.

It localises to the cell membrane. Functionally, putative taste receptor. TAS1R2/TAS1R3 recognizes diverse natural and synthetic sweeteners. This Saimiri sciureus (Common squirrel monkey) protein is Taste receptor type 1 member 2 (TAS1R2).